An 83-amino-acid polypeptide reads, in one-letter code: Cytochrome b559 subunit alpha (83 aa).

Residues 21–35 (VIHSITIPSLFIAGW) traverse the membrane as a helical segment. Histidine 23 contacts heme.

The protein belongs to the PsbE/PsbF family. Heterodimer of an alpha subunit and a beta subunit. PSII is composed of 1 copy each of membrane proteins PsbA, PsbB, PsbC, PsbD, PsbE, PsbF, PsbH, PsbI, PsbJ, PsbK, PsbL, PsbM, PsbT, PsbX, PsbY, PsbZ, Psb30/Ycf12, at least 3 peripheral proteins of the oxygen-evolving complex and a large number of cofactors. It forms dimeric complexes. Heme b serves as cofactor.

It localises to the plastid. It is found in the chloroplast thylakoid membrane. Its function is as follows. This b-type cytochrome is tightly associated with the reaction center of photosystem II (PSII). PSII is a light-driven water:plastoquinone oxidoreductase that uses light energy to abstract electrons from H(2)O, generating O(2) and a proton gradient subsequently used for ATP formation. It consists of a core antenna complex that captures photons, and an electron transfer chain that converts photonic excitation into a charge separation. This Staurastrum punctulatum (Green alga) protein is Cytochrome b559 subunit alpha.